We begin with the raw amino-acid sequence, 330 residues long: tRNA U34 carboxymethyltransferase (330 aa).

Residues Lys91, Trp105, Lys110, Gly130, 152-154, 181-182, Met196, Tyr200, and Arg315 contribute to the carboxy-S-adenosyl-L-methionine site; these read DPS and IE.

The protein belongs to the class I-like SAM-binding methyltransferase superfamily. CmoB family. In terms of assembly, homotetramer.

The catalysed reaction is carboxy-S-adenosyl-L-methionine + 5-hydroxyuridine(34) in tRNA = 5-carboxymethoxyuridine(34) in tRNA + S-adenosyl-L-homocysteine + H(+). Catalyzes carboxymethyl transfer from carboxy-S-adenosyl-L-methionine (Cx-SAM) to 5-hydroxyuridine (ho5U) to form 5-carboxymethoxyuridine (cmo5U) at position 34 in tRNAs. This chain is tRNA U34 carboxymethyltransferase, found in Shewanella woodyi (strain ATCC 51908 / MS32).